The chain runs to 156 residues: VapC ribonuclease AF_1683 (156 aa).

Residues 4 to 125 enclose the PINc domain; the sequence is LIDTGIFFGF…KLISYDSRFS (122 aa). Positions 6 and 103 each coordinate Mg(2+).

The protein belongs to the PINc/VapC protein family. Mg(2+) is required as a cofactor.

Its function is as follows. Toxic component of a type II toxin-antitoxin (TA) system. An RNase. This is VapC ribonuclease AF_1683 from Archaeoglobus fulgidus (strain ATCC 49558 / DSM 4304 / JCM 9628 / NBRC 100126 / VC-16).